Reading from the N-terminus, the 223-residue chain is NLP effector protein 2 (223 aa).

A Conserved undecapeptide motif motif is present at residues 90 to 100 (AIMYSWYFPKD). Residues 107–113 (GHRHDWE) carry the Conserved p motif motif.

Belongs to the Necrosis inducing protein (NPP1) family.

The protein localises to the secreted. It localises to the host cytoplasm. Probable secreted effector that may act as a pathogen-associated molecular pattern (PAMP) recognized by the plant immune system. Seems not to induce necrosis, neither in several susceptible or resistant Vitis species nor in the dicot model plant Nicotiana benthamiana. The protein is NLP effector protein 2 of Plasmopara viticola (Downy mildew of grapevine).